The chain runs to 214 residues: Phosphopantothenoylcysteine decarboxylase HAL3 (214 aa).

FMN is bound by residues 30-32 and 55-57; these read GSV and TRA. Catalysis depends on His92, which acts as the Proton donor. Residues 108-111 and Ala142 contribute to the FMN site; that span reads SANT. Positions 144, 174, and 176 each coordinate N-[(R)-4-phosphopantothenoyl]-L-cysteine. Cys177 serves as the catalytic Proton donor. Position 185 (Met185) interacts with N-[(R)-4-phosphopantothenoyl]-L-cysteine.

It belongs to the HFCD (homooligomeric flavin containing Cys decarboxylase) superfamily. Homotrimer. It depends on FMN as a cofactor. Mainly expressed in stems, to a lower extent in flowers, leaves and fruits, and at basal levels in roots.

It localises to the cell membrane. It is found in the cytoplasm. The enzyme catalyses N-[(R)-4-phosphopantothenoyl]-L-cysteine + H(+) = (R)-4'-phosphopantetheine + CO2. It participates in cofactor biosynthesis; coenzyme A biosynthesis; CoA from (R)-pantothenate: step 3/5. Functionally, involved in plant growth, and promotes salt and osmotic tolerance, probably via coenzyme A (CoA) accumulation and endogenous proline accumulation. Catalyzes the decarboxylation of 4'-phosphopantothenoylcysteine to 4'-phosphopantetheine, a key step in coenzyme A biosynthesis. Required for roots development. The protein is Phosphopantothenoylcysteine decarboxylase HAL3 of Malus domestica (Apple).